A 360-amino-acid polypeptide reads, in one-letter code: Phospho-N-acetylmuramoyl-pentapeptide-transferase (360 aa).

10 helical membrane passes run 25-45, 73-93, 97-117, 132-152, 168-188, 199-219, 236-256, 263-283, 288-308, and 338-358; these read RGIL…PWMI, TMGG…WADL, YVWV…VDDY, WKYF…YMTA, VSIP…VGSS, GLAI…CYLS, AGEL…FLWF, VFMG…IAVI, VVLF…IIQV, and VIVR…ATLK.

It belongs to the glycosyltransferase 4 family. MraY subfamily. Requires Mg(2+) as cofactor.

Its subcellular location is the cell inner membrane. The catalysed reaction is UDP-N-acetyl-alpha-D-muramoyl-L-alanyl-gamma-D-glutamyl-meso-2,6-diaminopimeloyl-D-alanyl-D-alanine + di-trans,octa-cis-undecaprenyl phosphate = di-trans,octa-cis-undecaprenyl diphospho-N-acetyl-alpha-D-muramoyl-L-alanyl-D-glutamyl-meso-2,6-diaminopimeloyl-D-alanyl-D-alanine + UMP. The protein operates within cell wall biogenesis; peptidoglycan biosynthesis. Functionally, catalyzes the initial step of the lipid cycle reactions in the biosynthesis of the cell wall peptidoglycan: transfers peptidoglycan precursor phospho-MurNAc-pentapeptide from UDP-MurNAc-pentapeptide onto the lipid carrier undecaprenyl phosphate, yielding undecaprenyl-pyrophosphoryl-MurNAc-pentapeptide, known as lipid I. The sequence is that of Phospho-N-acetylmuramoyl-pentapeptide-transferase from Ectopseudomonas mendocina (strain ymp) (Pseudomonas mendocina).